A 181-amino-acid chain; its full sequence is Trafficking protein particle complex subunit 3 homolog (181 aa).

A lipid anchor (S-palmitoyl cysteine) is attached at cysteine 70.

The protein belongs to the TRAPP small subunits family. BET3 subfamily. Homodimer. Part of the multisubunit TRAPP (transport protein particle) complex.

It localises to the golgi apparatus. Its subcellular location is the cis-Golgi network. The protein localises to the endoplasmic reticulum. Its function is as follows. May play a role in vesicular transport from endoplasmic reticulum to Golgi. Required for the systemic spread of the RNAi response. This is Trafficking protein particle complex subunit 3 homolog (trpp-3) from Caenorhabditis elegans.